Reading from the N-terminus, the 133-residue chain is ATP synthase epsilon chain (133 aa).

This sequence belongs to the ATPase epsilon chain family. F-type ATPases have 2 components, CF(1) - the catalytic core - and CF(0) - the membrane proton channel. CF(1) has five subunits: alpha(3), beta(3), gamma(1), delta(1), epsilon(1). CF(0) has three main subunits: a, b and c.

Its subcellular location is the cellular thylakoid membrane. Its function is as follows. Produces ATP from ADP in the presence of a proton gradient across the membrane. This is ATP synthase epsilon chain from Prochlorococcus marinus (strain MIT 9303).